The primary structure comprises 85 residues: Large ribosomal subunit protein eL34 (85 aa).

Belongs to the eukaryotic ribosomal protein eL34 family.

The protein is Large ribosomal subunit protein eL34 of Saccharolobus islandicus (strain M.16.27) (Sulfolobus islandicus).